Consider the following 369-residue polypeptide: Putative agmatine deiminase 2 (369 aa).

The Amidino-cysteine intermediate role is filled by Cys-356.

The protein belongs to the agmatine deiminase family.

The catalysed reaction is agmatine + H2O = N-carbamoylputrescine + NH4(+). This is Putative agmatine deiminase 2 from Listeria monocytogenes serovar 1/2a (strain ATCC BAA-679 / EGD-e).